Consider the following 474-residue polypeptide: Nitric oxide reductase subunit B (474 aa).

A helical transmembrane segment spans residues 19–39; sequence YFVFALILFVGQVLFGLIMGL. Histidine 60 serves as a coordination point for heme b. Helical transmembrane passes span 61–81, 95–115, 145–165, 169–189, 207–227, 243–263, 270–290, and 308–328; these read TNLLIVWLLFGFMGAAYYLIP, IILFWVFAAAGVLTILGYLFV, IGIVVVALGFLYNIGMTMLKG, VVSTVMMTGLIGLAVFFLFAF, HLWVEGVWELIMGAMLAFVLI, VIIAMALITGIIGTGHHFFWI, LWVGSIFSALEPLPFFAMVLF, and SLWAIGTTVTAFLGAGVWGFM. Histidine 207, histidine 258, and histidine 259 together coordinate Fe cation. Histidine 347 and histidine 349 together coordinate heme b. 3 helical membrane-spanning segments follow: residues 348-368, 390-410, and 433-453; these read GHLAFYGAYAMIVMTMISYAM, FWLMTISMIAITLFLTAAGVV, and LAIFFWLRFIAGVFFLIGLVC.

Belongs to the heme-copper respiratory oxidase family. Heterodimer of cytochromes b (large subunit) and c (small subunit).

The protein resides in the cell membrane. It catalyses the reaction nitrous oxide + 2 Fe(III)-[cytochrome c] + H2O = 2 nitric oxide + 2 Fe(II)-[cytochrome c] + 2 H(+). It functions in the pathway nitrogen metabolism; nitrate reduction (denitrification); dinitrogen from nitrate: step 3/4. Functionally, component of the anaerobic respiratory chain that transforms nitrate to dinitrogen (denitrification). NorB is the catalytic subunit of the enzyme complex. Shows proton pump activity across the membrane in denitrifying bacterial cells. The mononitrogen reduction is probably coupled to electron transport phosphorylation. In Stutzerimonas stutzeri (Pseudomonas stutzeri), this protein is Nitric oxide reductase subunit B (norB).